Reading from the N-terminus, the 268-residue chain is Large ribosomal subunit protein uL4 (268 aa).

The protein belongs to the universal ribosomal protein uL4 family. In terms of assembly, part of the 50S ribosomal subunit.

One of the primary rRNA binding proteins, this protein initially binds near the 5'-end of the 23S rRNA. It is important during the early stages of 50S assembly. It makes multiple contacts with different domains of the 23S rRNA in the assembled 50S subunit and ribosome. Functionally, forms part of the polypeptide exit tunnel. The protein is Large ribosomal subunit protein uL4 of Nanoarchaeum equitans (strain Kin4-M).